Consider the following 146-residue polypeptide: Large ribosomal subunit protein bL9 (146 aa).

Belongs to the bacterial ribosomal protein bL9 family.

Functionally, binds to the 23S rRNA. The polypeptide is Large ribosomal subunit protein bL9 (Deinococcus geothermalis (strain DSM 11300 / CIP 105573 / AG-3a)).